The following is a 259-amino-acid chain: Flagellar L-ring protein (259 aa).

The first 15 residues, 1–15 (MKRISLIALVTIMSG), serve as a signal peptide directing secretion. Cysteine 16 carries the N-palmitoyl cysteine lipid modification. A lipid anchor (S-diacylglycerol cysteine) is attached at cysteine 16.

Belongs to the FlgH family. The basal body constitutes a major portion of the flagellar organelle and consists of four rings (L,P,S, and M) mounted on a central rod.

Its subcellular location is the cell outer membrane. It localises to the bacterial flagellum basal body. Functionally, assembles around the rod to form the L-ring and probably protects the motor/basal body from shearing forces during rotation. The protein is Flagellar L-ring protein of Vibrio vulnificus (strain CMCP6).